Here is a 235-residue protein sequence, read N- to C-terminus: Leucyl/phenylalanyl-tRNA--protein transferase (235 aa).

Belongs to the L/F-transferase family.

Its subcellular location is the cytoplasm. The enzyme catalyses N-terminal L-lysyl-[protein] + L-leucyl-tRNA(Leu) = N-terminal L-leucyl-L-lysyl-[protein] + tRNA(Leu) + H(+). It catalyses the reaction N-terminal L-arginyl-[protein] + L-leucyl-tRNA(Leu) = N-terminal L-leucyl-L-arginyl-[protein] + tRNA(Leu) + H(+). It carries out the reaction L-phenylalanyl-tRNA(Phe) + an N-terminal L-alpha-aminoacyl-[protein] = an N-terminal L-phenylalanyl-L-alpha-aminoacyl-[protein] + tRNA(Phe). Its function is as follows. Functions in the N-end rule pathway of protein degradation where it conjugates Leu, Phe and, less efficiently, Met from aminoacyl-tRNAs to the N-termini of proteins containing an N-terminal arginine or lysine. This Methylococcus capsulatus (strain ATCC 33009 / NCIMB 11132 / Bath) protein is Leucyl/phenylalanyl-tRNA--protein transferase.